The primary structure comprises 668 residues: MKGKTMIDRKEDNQFHLVSKYEPSGDQPQAIETLVDNIKGGEKAQILKGATGTGKTYTMSQVIQRVNKPTLVIAHNKTLAGQLYGEFKEFFPDNAVEYFVSYYDYYQPEAYVPSSDTYIEKDSSVNDEIDKLRHSATSALLERNDVIVVASVSCIYGLGSPKEYADSAVSLRPGQEISRDKLLNDLVDIQFERNDIDFQRGKFRVRGDVVEIFPASRDENAFRVEFFGDEIDRICEIESLTGRNLGEVEHLVLFPATHFMTNEEHMEEAIKNIMEEMEVQVNQFEAEGKLIEAQRIRQRTEYDVEMLREMGYTNGIENYSRHMDGRKEGEPPFTLLDFFPEDFLIMIDESHMTMGQIKGMYNGDQARKKMLVDYGFRLPSALDNRPLRREEFESHVHQIVYVSATPGDYEMEQTETVVEQIIRPTGLLDPEVEVRPTMGQMDDLLGEINARTEKGERVFVTTLTKKMAEDLTDYLKEMGVKVKYMHSDIKTLERTEIIRDLRLGVFDVLIGINLLREGIDVPEVSLVAILDADKEGFLRNERGLIQTIGRAARNSDGHVIMYADKITESMQKAMDETARRREIQMAYNKEHGITPQTIKKEIRDLISITKTNEAEVAEDTVNYSAMNKKERQEAIKKLQKQMHEAAELLDFELAAQIRDMVLELKSMD.

One can recognise a Helicase ATP-binding domain in the interval 36 to 276; sequence DNIKGGEKAQ…EEAIKNIMEE (241 aa). An ATP-binding site is contributed by 49 to 56; it reads GATGTGKT. Positions 102–125 match the Beta-hairpin motif; the sequence is YYDYYQPEAYVPSSDTYIEKDSSV. The region spanning 440-606 is the Helicase C-terminal domain; that stretch reads QMDDLLGEIN…TIKKEIRDLI (167 aa). The UVR domain occupies 632–667; that stretch reads QEAIKKLQKQMHEAAELLDFELAAQIRDMVLELKSM.

Belongs to the UvrB family. Forms a heterotetramer with UvrA during the search for lesions. Interacts with UvrC in an incision complex.

Its subcellular location is the cytoplasm. Its function is as follows. The UvrABC repair system catalyzes the recognition and processing of DNA lesions. A damage recognition complex composed of 2 UvrA and 2 UvrB subunits scans DNA for abnormalities. Upon binding of the UvrA(2)B(2) complex to a putative damaged site, the DNA wraps around one UvrB monomer. DNA wrap is dependent on ATP binding by UvrB and probably causes local melting of the DNA helix, facilitating insertion of UvrB beta-hairpin between the DNA strands. Then UvrB probes one DNA strand for the presence of a lesion. If a lesion is found the UvrA subunits dissociate and the UvrB-DNA preincision complex is formed. This complex is subsequently bound by UvrC and the second UvrB is released. If no lesion is found, the DNA wraps around the other UvrB subunit that will check the other stand for damage. This chain is UvrABC system protein B, found in Streptococcus thermophilus (strain ATCC BAA-491 / LMD-9).